The sequence spans 530 residues: MSMKWISVLLGLQLSCYFSSGSCGKVLVWPTEYSHWINVKTILDELVQRGHEVTVLTSSASILVDPNKLSAIKFEIYSAHLSRGDFEAFFIKLLNILIYDMPKDSFWTYFSLMQEFFWEFYECAQKLCKDVVLNKKLMTKLQESKFDLVLADTIIPCGELLAELLKIPLVYSLRFSPGYAFEKHSGGLPLPPSYVPVILSELTDQMTFMERVKNMLYVLYFDFWFQTINEKSWDQFYSEVLGRPTTLYELMRKADIWLIRTYWDFEYPHPLLPHFDFVGGLHCKPAKSLPTEMEEFVQSSGENGIVVFSLGSMVNNMTEERANVIASALAQIPQKVLWRFDGKKPDTLGPNTRLYKWLPQNDLLGHPKTKAFITHGGTNGIYEAIYHGIPMVGIPLFADQADNIVHMKAKGAAIRLDFSTMSSADLLNALRMVINDPSYKENAMKLSGIHHDQPIKPLDRAVFWIEYVMRHQGAKHLRPASHDLTWFQYHSLDVIGFLLACVATAIFVTTQCCLFCCRKVAKTGKKIKKE.

An N-terminal signal peptide occupies residues 1 to 24 (MSMKWISVLLGLQLSCYFSSGSCG). K136 carries the post-translational modification N6-succinyllysine. A glycan (N-linked (GlcNAc...) asparagine) is linked at N316. A helical transmembrane segment spans residues 495–515 (IGFLLACVATAIFVTTQCCLF).

This sequence belongs to the UDP-glycosyltransferase family.

The protein localises to the microsome membrane. It is found in the endoplasmic reticulum membrane. The enzyme catalyses glucuronate acceptor + UDP-alpha-D-glucuronate = acceptor beta-D-glucuronoside + UDP + H(+). Its function is as follows. UDPGTs are of major importance in the conjugation and subsequent elimination of potentially toxic xenobiotics and endogenous compounds. This isozyme has glucuronidating capacity on phenols, opioids, and carboxylic acid-containing drugs. The chain is UDP-glucuronosyltransferase 2B31 (UGT2B31) from Canis lupus familiaris (Dog).